Here is a 69-residue protein sequence, read N- to C-terminus: Small, acid-soluble spore protein C1 (69 aa).

The protein belongs to the alpha/beta-type SASP family.

Its function is as follows. SASP are bound to spore DNA. They are double-stranded DNA-binding proteins that cause DNA to change to an a-like conformation. They protect the DNA backbone from chemical and enzymatic cleavage and are thus involved in dormant spore's high resistance to UV light. In Priestia megaterium (Bacillus megaterium), this protein is Small, acid-soluble spore protein C1 (SASP-C1).